We begin with the raw amino-acid sequence, 620 residues long: UPF0313 protein BT_0254 (620 aa).

The 281-residue stretch at 311 to 591 folds into the Radical SAM core domain; sequence AYDMIKFSVN…AQRQFFFWYK (281 aa). [4Fe-4S] cluster is bound by residues Cys-325, Cys-329, and Cys-332.

It belongs to the UPF0313 family. It depends on [4Fe-4S] cluster as a cofactor.

This chain is UPF0313 protein BT_0254, found in Bacteroides thetaiotaomicron (strain ATCC 29148 / DSM 2079 / JCM 5827 / CCUG 10774 / NCTC 10582 / VPI-5482 / E50).